Reading from the N-terminus, the 20-residue chain is Cytochrome c oxidase subunit 8B, mitochondrial (20 aa).

A disordered region spans residues 1-20 (LSGKPAKXHLSVGEQAIAMT).

Belongs to the cytochrome c oxidase VIII family. Component of the cytochrome c oxidase (complex IV, CIV), a multisubunit enzyme composed of 14 subunits. The complex is composed of a catalytic core of 3 subunits MT-CO1, MT-CO2 and MT-CO3, encoded in the mitochondrial DNA, and 11 supernumerary subunits COX4I, COX5A, COX5B, COX6A, COX6B, COX6C, COX7A, COX7B, COX7C, COX8 and NDUFA4, which are encoded in the nuclear genome. The complex exists as a monomer or a dimer and forms supercomplexes (SCs) in the inner mitochondrial membrane with NADH-ubiquinone oxidoreductase (complex I, CI) and ubiquinol-cytochrome c oxidoreductase (cytochrome b-c1 complex, complex III, CIII), resulting in different assemblies (supercomplex SCI(1)III(2)IV(1) and megacomplex MCI(2)III(2)IV(2)).

It is found in the mitochondrion inner membrane. Its pathway is energy metabolism; oxidative phosphorylation. Its function is as follows. Component of the cytochrome c oxidase, the last enzyme in the mitochondrial electron transport chain which drives oxidative phosphorylation. The respiratory chain contains 3 multisubunit complexes succinate dehydrogenase (complex II, CII), ubiquinol-cytochrome c oxidoreductase (cytochrome b-c1 complex, complex III, CIII) and cytochrome c oxidase (complex IV, CIV), that cooperate to transfer electrons derived from NADH and succinate to molecular oxygen, creating an electrochemical gradient over the inner membrane that drives transmembrane transport and the ATP synthase. Cytochrome c oxidase is the component of the respiratory chain that catalyzes the reduction of oxygen to water. Electrons originating from reduced cytochrome c in the intermembrane space (IMS) are transferred via the dinuclear copper A center (CU(A)) of subunit 2 and heme A of subunit 1 to the active site in subunit 1, a binuclear center (BNC) formed by heme A3 and copper B (CU(B)). The BNC reduces molecular oxygen to 2 water molecules using 4 electrons from cytochrome c in the IMS and 4 protons from the mitochondrial matrix. The polypeptide is Cytochrome c oxidase subunit 8B, mitochondrial (Oncorhynchus mykiss (Rainbow trout)).